Consider the following 272-residue polypeptide: L-aspartate dehydrogenase (272 aa).

NAD(+) contacts are provided by Ala-125 and Asn-192. His-222 is an active-site residue.

It belongs to the L-aspartate dehydrogenase family.

It carries out the reaction L-aspartate + NADP(+) + H2O = oxaloacetate + NH4(+) + NADPH + H(+). The catalysed reaction is L-aspartate + NAD(+) + H2O = oxaloacetate + NH4(+) + NADH + H(+). The protein operates within cofactor biosynthesis; NAD(+) biosynthesis; iminoaspartate from L-aspartate (dehydrogenase route): step 1/1. Specifically catalyzes the NAD or NADP-dependent dehydrogenation of L-aspartate to iminoaspartate. The polypeptide is L-aspartate dehydrogenase (Nitrosopumilus maritimus (strain SCM1)).